Reading from the N-terminus, the 118-residue chain is Large ribosomal subunit protein bL20 (118 aa).

It belongs to the bacterial ribosomal protein bL20 family.

In terms of biological role, binds directly to 23S ribosomal RNA and is necessary for the in vitro assembly process of the 50S ribosomal subunit. It is not involved in the protein synthesizing functions of that subunit. This chain is Large ribosomal subunit protein bL20, found in Rhodopirellula baltica (strain DSM 10527 / NCIMB 13988 / SH1).